Here is a 92-residue protein sequence, read N- to C-terminus: Parbolysin P7 (92 aa).

Disulfide bonds link cysteine 15–cysteine 36, cysteine 21–cysteine 32, and cysteine 46–cysteine 59.

This sequence belongs to the worm cytolysin family. Localized within the skin and proboscis and are most readily isolated from body mucus secretions.

The protein resides in the secreted. Its function is as follows. Cytolysin that shows hemolytic activity (on bovine erythrocytes, HC(50)=5.75 mg/ml). This hemolytic activity is completely inhibited by small unilamelar vesicles composed of PC/PG, PC/PI and PC/PS in 1:1 molar ratios (with at least 100 mg/ml concentration). This chain is Parbolysin P7, found in Parborlasia corrugatus (Antarctic nemertean worm).